The chain runs to 132 residues: MTEGTATIRTRKFMTNRLLARKQMVCDVLHPGKPTVSKTEIREKLAKMYKVTPDVVFVFGFKTNFGGGKSTGFALIYDTLDLAKKFEPKHRLARHGLYEKKRPTRKQRKERKNRMKKVRGTKKSKVGAAAKK.

The span at 92–101 (LARHGLYEKK) shows a compositional bias: basic and acidic residues. Positions 92–132 (LARHGLYEKKRPTRKQRKERKNRMKKVRGTKKSKVGAAAKK) are disordered. A compositionally biased stretch (basic residues) spans 102–132 (RPTRKQRKERKNRMKKVRGTKKSKVGAAAKK).

It belongs to the eukaryotic ribosomal protein eS24 family.

The polypeptide is Small ribosomal subunit protein eS24 (RpS24) (Spodoptera frugiperda (Fall armyworm)).